A 354-amino-acid chain; its full sequence is Threonine synthase (354 aa).

Lys61 carries the N6-(pyridoxal phosphate)lysine modification. Pyridoxal 5'-phosphate-binding positions include Asn87, 187–191, and Thr316; that span reads GNAGN.

The protein belongs to the threonine synthase family. Pyridoxal 5'-phosphate serves as cofactor.

The catalysed reaction is O-phospho-L-homoserine + H2O = L-threonine + phosphate. It participates in amino-acid biosynthesis; L-threonine biosynthesis; L-threonine from L-aspartate: step 5/5. In terms of biological role, catalyzes the gamma-elimination of phosphate from L-phosphohomoserine and the beta-addition of water to produce L-threonine. In Halalkalibacterium halodurans (strain ATCC BAA-125 / DSM 18197 / FERM 7344 / JCM 9153 / C-125) (Bacillus halodurans), this protein is Threonine synthase (thrC).